The chain runs to 524 residues: MSQNSSSLLETWRQVVADLTTLSQQADSGFDPLTPTQRAYLNLTKPIAIVDGYAVLSTPNAMAKNVIENDLGDALTRVLSLRMGRSFSLAVSVEPEQEIPETPAQQEFKYQPDAPVISSNKAPKQYEVGGRGGASTSDGWERTHSAPAPEPHPAPIADPEPELATPQRIPRETPAHNPNREVSLNPKYTFESFVIGPFNRFANAAAVAVAESPAKAFNPLFISGGSGLGKTHLLHAVGNYAQELQPGLRIKYVSSEEFTNDYINSVRDDRQETFKRRYRNLDILMVDDIQFLAGKEGTQEEFFHTFNALHQADKQIILSSDRPPKQLTTLEDRLRTRFEGGLITDIQPPDLETRIAILMKKAQTDGTHVDREVLELIASRFESSIRELEGALIRVSAYSSLINQPIDKEMAIVALRDILPEPEDMEITAPVIMEVTAEYFEISVDTLRGAGKTRAVAHARQLAMYLCRELTDMSLPKIGDVFGGKDHTTVMYADRKIRQEMTEKRDTYDEIQQLTQLIKSRGRN.

Positions 1-105 are domain I, interacts with DnaA modulators; that stretch reads MSQNSSSLLE…EQEIPETPAQ (105 aa). Positions 95–183 are disordered; that stretch reads PEQEIPETPA…PAHNPNREVS (89 aa). The domain II stretch occupies residues 106-182; it reads QEFKYQPDAP…TPAHNPNREV (77 aa). The segment covering 148 to 158 has biased composition (pro residues); the sequence is APEPHPAPIAD. A domain III, AAA+ region region spans residues 183-399; sequence SLNPKYTFES…GALIRVSAYS (217 aa). The ATP site is built by glycine 227, glycine 229, lysine 230, and threonine 231. The segment at 400–524 is domain IV, binds dsDNA; it reads SLINQPIDKE…TQLIKSRGRN (125 aa).

The protein belongs to the DnaA family. As to quaternary structure, oligomerizes as a right-handed, spiral filament on DNA at oriC.

It localises to the cytoplasm. Its function is as follows. Plays an essential role in the initiation and regulation of chromosomal replication. ATP-DnaA binds to the origin of replication (oriC) to initiate formation of the DNA replication initiation complex once per cell cycle. Binds the DnaA box (a 9 base pair repeat at the origin) and separates the double-stranded (ds)DNA. Forms a right-handed helical filament on oriC DNA; dsDNA binds to the exterior of the filament while single-stranded (ss)DNA is stabiized in the filament's interior. The ATP-DnaA-oriC complex binds and stabilizes one strand of the AT-rich DNA unwinding element (DUE), permitting loading of DNA polymerase. After initiation quickly degrades to an ADP-DnaA complex that is not apt for DNA replication. Binds acidic phospholipids. This Corynebacterium glutamicum (strain R) protein is Chromosomal replication initiator protein DnaA.